A 222-amino-acid polypeptide reads, in one-letter code: Probable fimbrial chaperone EcpB (222 aa).

Residues 1-20 (MKKHLLLLALLLSGISPAQA) form the signal peptide.

It belongs to the EcpB/EcpE family.

Functionally, part of the ecpRABCDE operon, which encodes the E.coli common pilus (ECP). ECP is found in both commensal and pathogenic strains and plays a dual role in early-stage biofilm development and host cell recognition. The sequence is that of Probable fimbrial chaperone EcpB (ecpB) from Escherichia coli O157:H7.